The primary structure comprises 49 residues: Venom peptide 3 (49 aa).

The first 23 residues, 1–23, serve as a signal peptide directing secretion; that stretch reads MRFTFVLVIAATVAVLGFFGINA. 2 AXPX repeats span residues 23–26 and 31–34; these read AEPM and AEPY. The propeptide occupies 24 to 37; that stretch reads EPMPDPHAEPYPDA. The residue at position 48 (L48) is a Leucine amide.

As to expression, expressed by the venom gland.

Its subcellular location is the secreted. In Eumenes pomiformis (Potter wasp), this protein is Venom peptide 3.